Reading from the N-terminus, the 216-residue chain is Lipoprotein signal peptidase (216 aa).

The segment at Met-1–Glu-21 is disordered. A run of 3 helical transmembrane segments spans residues Val-31–Thr-51, Gly-89–Ala-109, and Ser-114–Asp-134. Catalysis depends on residues Asp-149 and Asp-164. Residues Ile-159 to Leu-179 form a helical membrane-spanning segment. The disordered stretch occupies residues Gln-189–Ala-216. Residues Ala-207 to Ala-216 show a composition bias toward basic and acidic residues.

It belongs to the peptidase A8 family.

It localises to the cell membrane. It catalyses the reaction Release of signal peptides from bacterial membrane prolipoproteins. Hydrolyzes -Xaa-Yaa-Zaa-|-(S,diacylglyceryl)Cys-, in which Xaa is hydrophobic (preferably Leu), and Yaa (Ala or Ser) and Zaa (Gly or Ala) have small, neutral side chains.. It participates in protein modification; lipoprotein biosynthesis (signal peptide cleavage). This protein specifically catalyzes the removal of signal peptides from prolipoproteins. In Leifsonia xyli subsp. xyli (strain CTCB07), this protein is Lipoprotein signal peptidase.